A 292-amino-acid polypeptide reads, in one-letter code: 4-hydroxy-tetrahydrodipicolinate synthase (292 aa).

Thr-45 is a pyruvate binding site. Residue Tyr-133 is the Proton donor/acceptor of the active site. The active-site Schiff-base intermediate with substrate is Lys-161. Ile-203 contributes to the pyruvate binding site.

It belongs to the DapA family. In terms of assembly, homotetramer; dimer of dimers.

It is found in the cytoplasm. The enzyme catalyses L-aspartate 4-semialdehyde + pyruvate = (2S,4S)-4-hydroxy-2,3,4,5-tetrahydrodipicolinate + H2O + H(+). It participates in amino-acid biosynthesis; L-lysine biosynthesis via DAP pathway; (S)-tetrahydrodipicolinate from L-aspartate: step 3/4. Its function is as follows. Catalyzes the condensation of (S)-aspartate-beta-semialdehyde [(S)-ASA] and pyruvate to 4-hydroxy-tetrahydrodipicolinate (HTPA). This is 4-hydroxy-tetrahydrodipicolinate synthase from Shigella flexneri.